A 188-amino-acid polypeptide reads, in one-letter code: Type II secretion system protein H (188 aa).

Residues 1-10 (MKRSTRKQQG) constitute a propeptide, leader sequence. F11 carries the N-methylphenylalanine modification. A helical membrane pass occupies residues 13 to 35 (LLEMMLVVLLAGIAAGMVVMAFP).

Belongs to the GSP H family. In terms of assembly, type II secretion is composed of four main components: the outer membrane complex, the inner membrane complex, the cytoplasmic secretion ATPase and the periplasm-spanning pseudopilus. Interacts with core component OutG. In terms of processing, cleaved by prepilin peptidase. Methylated by prepilin peptidase at the amino group of the N-terminal phenylalanine once the leader sequence is cleaved by prepilin peptidase.

It is found in the cell inner membrane. Its function is as follows. Component of the type II secretion system required for the energy-dependent secretion of extracellular factors such as proteases and toxins from the periplasm. Part of the pseudopilus tip complex that is critical for the recognition and binding of secretion substrates. This chain is Type II secretion system protein H (outH), found in Pectobacterium carotovorum subsp. carotovorum (Erwinia carotovora subsp. carotovora).